An 82-amino-acid polypeptide reads, in one-letter code: Small ribosomal subunit protein bS16 (82 aa).

This sequence belongs to the bacterial ribosomal protein bS16 family.

This is Small ribosomal subunit protein bS16 from Dehalococcoides mccartyi (strain ATCC BAA-2100 / JCM 16839 / KCTC 5957 / BAV1).